Reading from the N-terminus, the 653-residue chain is Calpain-10 (653 aa).

Residues 13–321 enclose the Calpain catalytic domain; sequence LFRDAAFPAA…FDEITIGYPI (309 aa). Catalysis depends on residues C73, H238, and N263. Domain III regions lie at residues 322 to 494 and 513 to 653; these read TEAG…VSLS and EWGT…PSWQ.

This sequence belongs to the peptidase C2 family.

Its function is as follows. Calcium-regulated non-lysosomal thiol-protease which catalyzes limited proteolysis of substrates involved in cytoskeletal remodeling and signal transduction. May play a role in insulin-stimulated glucose uptake. This is Calpain-10 (CAPN10) from Macaca fascicularis (Crab-eating macaque).